Reading from the N-terminus, the 330-residue chain is Carbonic anhydrase 1 (330 aa).

Residues 1-109 are chloroplast transit peptide-like; that stretch reads MSTASAFAIN…AAARIDQITA (109 aa).

Belongs to the beta-class carbonic anhydrase family. As to quaternary structure, homohexamer.

The protein resides in the cytoplasm. The enzyme catalyses hydrogencarbonate + H(+) = CO2 + H2O. Functionally, reversible hydration of carbon dioxide. In Flaveria linearis (Narrowleaf yellowtops), this protein is Carbonic anhydrase 1.